The chain runs to 222 residues: Flagellar L-ring protein (222 aa).

An N-terminal signal peptide occupies residues 1–21 (MQTFLYPRTWLILGLLLLGSG). Cys22 is lipidated: N-palmitoyl cysteine. Cys22 is lipidated: S-diacylglycerol cysteine.

Belongs to the FlgH family. In terms of assembly, the basal body constitutes a major portion of the flagellar organelle and consists of four rings (L,P,S, and M) mounted on a central rod.

It localises to the cell outer membrane. Its subcellular location is the bacterial flagellum basal body. Its function is as follows. Assembles around the rod to form the L-ring and probably protects the motor/basal body from shearing forces during rotation. In Methylobacillus flagellatus (strain ATCC 51484 / DSM 6875 / VKM B-1610 / KT), this protein is Flagellar L-ring protein.